A 112-amino-acid polypeptide reads, in one-letter code: MALSQYLFGIKGEDIACEYLKNKDFEILERNFHSKFGEIDIIAKKDKILHFIEVKSTQGNYEVAYRLDGKKYNKIIKTIEYYFMKHKSNENFQLDLLCVYKDDIKLLENISY.

Belongs to the UPF0102 family.

This Campylobacter lari (strain RM2100 / D67 / ATCC BAA-1060) protein is UPF0102 protein Cla_1413.